The chain runs to 474 residues: Phenolic acid decarboxylase (474 aa).

Residues N161, H182, and E224 each coordinate Mn(2+). Prenylated FMN contacts are provided by residues 161–166 (NVGTYR) and 181–182 (MH). Residue E273 is the Proton donor of the active site.

This sequence belongs to the UbiD family. YclC subfamily. It depends on prenylated FMN as a cofactor. Mn(2+) is required as a cofactor.

It carries out the reaction vanillate + H(+) = guaiacol + CO2. Involved in the non-oxidative decarboxylation and detoxification of phenolic derivatives under both aerobic and anaerobic conditions. Phenolic acid decarboxylase that catalyzes the reversible decarboxylation of vanillate. The chain is Phenolic acid decarboxylase from Streptomyces sp. (strain D7).